Reading from the N-terminus, the 649-residue chain is Acetyl-coenzyme A synthetase (649 aa).

Residues arginine 191–arginine 194, threonine 311, and asparagine 335 contribute to the CoA site. ATP contacts are provided by residues glycine 387–proline 389, aspartate 411–threonine 416, aspartate 500, and arginine 515. Serine 523 contributes to the CoA binding site. An ATP-binding site is contributed by arginine 526. Residues valine 537, phenylalanine 539, and isoleucine 542 each coordinate Mg(2+). Residue arginine 584 participates in CoA binding. The residue at position 609 (lysine 609) is an N6-acetyllysine.

This sequence belongs to the ATP-dependent AMP-binding enzyme family. Mg(2+) is required as a cofactor. Post-translationally, acetylated. Deacetylation by the SIR2-homolog deacetylase activates the enzyme.

It carries out the reaction acetate + ATP + CoA = acetyl-CoA + AMP + diphosphate. Catalyzes the conversion of acetate into acetyl-CoA (AcCoA), an essential intermediate at the junction of anabolic and catabolic pathways. AcsA undergoes a two-step reaction. In the first half reaction, AcsA combines acetate with ATP to form acetyl-adenylate (AcAMP) intermediate. In the second half reaction, it can then transfer the acetyl group from AcAMP to the sulfhydryl group of CoA, forming the product AcCoA. The protein is Acetyl-coenzyme A synthetase of Photobacterium profundum (strain SS9).